Consider the following 999-residue polypeptide: Helicase required for RNAi-mediated heterochromatin assembly 1 (999 aa).

A disordered region spans residues 61–90 (EQIETSETSKTQDSEGNKVDKNLKENKSIR). The segment covering 70-88 (KTQDSEGNKVDKNLKENKS) has biased composition (basic and acidic residues). Serine 94 is modified (phosphoserine). The segment covering 106–124 (RNDITSGKNREFENEHHPA) has biased composition (basic and acidic residues). Residues 106–131 (RNDITSGKNREFENEHHPASDTSSWR) are disordered. 393–400 (GPPGTGKS) is an ATP binding site.

Cid12, hrr1 and rdp1 interact forming the RNA-directed RNA polymerase complex (RDRC). The RDRC complex interacts with the RITS complex via interaction between ago1 and hrr1. Clr4 has a role in mediating this interaction.

The protein resides in the cytoplasm. The protein localises to the nucleus. It catalyses the reaction ATP + H2O = ADP + phosphate + H(+). Functionally, has a role in the RNA interference (RNAi) pathway which is important for heterochromatin formation and accurate chromosome segregation. A member of the RNA-directed RNA polymerase complex (RDRC) which is involved in the generation of small interfering RNAs (siRNAs) and mediate their association with the RNA-induced transcriptional silencing (RITS) complex. RITS acts as a priming complex for dsRNA synthesis at the site of non-coding centromeric RNA. The chain is Helicase required for RNAi-mediated heterochromatin assembly 1 (hrr1) from Schizosaccharomyces pombe (strain 972 / ATCC 24843) (Fission yeast).